The primary structure comprises 387 residues: Fructose-1,6-bisphosphate aldolase/phosphatase (387 aa).

The active-site Proton acceptor; for FBP phosphatase activity is the aspartate 13. The Mg(2+) site is built by aspartate 13, histidine 20, aspartate 54, and aspartate 55. Position 20 (histidine 20) interacts with beta-D-fructose 1,6-bisphosphate. Residue histidine 20 coordinates dihydroxyacetone phosphate. Beta-D-fructose 1,6-bisphosphate is bound at residue tyrosine 92. Glutamine 96 lines the Mg(2+) pocket. Beta-D-fructose 1,6-bisphosphate is bound at residue 105 to 106; it reads GN. Aspartate 133 lines the Mg(2+) pocket. Lysine 134 serves as a coordination point for beta-D-fructose 1,6-bisphosphate. Residue lysine 134 participates in dihydroxyacetone phosphate binding. Tyrosine 229 serves as the catalytic Proton donor/acceptor; for FBP aldolase activity. Residues lysine 232, aspartate 233, and aspartate 234 each contribute to the Mg(2+) site. Catalysis depends on lysine 232, which acts as the Schiff-base intermediate with DHAP; for FBP aldolase activity. Residues 242–243, arginine 266, aspartate 287, and tyrosine 348 contribute to the beta-D-fructose 1,6-bisphosphate site; that span reads QS. Residues arginine 266 and aspartate 287 each coordinate dihydroxyacetone phosphate.

This sequence belongs to the FBP aldolase/phosphatase family. Homooctamer; dimer of tetramers. Mg(2+) serves as cofactor.

The catalysed reaction is beta-D-fructose 1,6-bisphosphate + H2O = beta-D-fructose 6-phosphate + phosphate. The enzyme catalyses beta-D-fructose 1,6-bisphosphate = D-glyceraldehyde 3-phosphate + dihydroxyacetone phosphate. The protein operates within carbohydrate biosynthesis; gluconeogenesis. Catalyzes two subsequent steps in gluconeogenesis: the aldol condensation of dihydroxyacetone phosphate (DHAP) and glyceraldehyde-3-phosphate (GA3P) to fructose-1,6-bisphosphate (FBP), and the dephosphorylation of FBP to fructose-6-phosphate (F6P). The protein is Fructose-1,6-bisphosphate aldolase/phosphatase of Ignicoccus hospitalis (strain KIN4/I / DSM 18386 / JCM 14125).